The following is a 139-amino-acid chain: Transcriptional regulator WhiB5 (139 aa).

One can recognise a 4Fe-4S Wbl-type domain in the interval 4 to 77 (PCATDPELWF…AGIKLPGGQY (74 aa)). Positions 5, 41, 45, and 53 each coordinate [4Fe-4S] cluster.

This sequence belongs to the WhiB family. Requires [4Fe-4S] cluster as cofactor. Post-translationally, the Fe-S cluster can be nitrosylated by nitric oxide (NO). Upon Fe-S cluster removal intramolecular disulfide bonds are formed.

The protein resides in the cytoplasm. Functionally, a transcription factor that is probably redox-responsive. Probably plays a role in immunomodulation and reactivation after chronic infection. Its induction results in transcription of a number of genes including sigM, and the genes for 2 type VII secretion systems ESX-2 and ESX-4. Seems to negatively regulate its own expression. The apo-form has been shown to act as a protein disulfide reductase. The apo- but not holo-form probably binds DNA. This Mycobacterium tuberculosis (strain ATCC 25618 / H37Rv) protein is Transcriptional regulator WhiB5 (whiB5).